Reading from the N-terminus, the 151-residue chain is UPF0208 membrane protein ESA_00924 (151 aa).

2 consecutive transmembrane segments (helical) span residues 46-65 (FAIRIMPPVAVFTLCWQIAL) and 69-91 (LGPAVATALFALSMPMQGLWWLG).

This sequence belongs to the UPF0208 family.

It is found in the cell inner membrane. The chain is UPF0208 membrane protein ESA_00924 from Cronobacter sakazakii (strain ATCC BAA-894) (Enterobacter sakazakii).